The sequence spans 514 residues: MSVSKKPMVLVILDGYGYREEQQDNAIFSAKTPVMDALWANRPHTLIDASGLEVGLPDRQMGNSEVGHVNLGAGRIVYQDLTRLDVEIKDRAFFANPVLTGAVDKAKNAGKAVHIMGLLSAGGVHSHEDHIMAMVELAAERGAEKIYLHAFLDGRDTPPRSAESSLKKFEEKFAALGKGRVASIIGRYYAMDRDNRWDRVEKAYDLLTLAQGEFQADTTVAGLQAAYARDENDEFVKATVIRAEGQPDAAMEDGDALIFMNFRADRAREITRAFVNADFDGFARKKVVNVDFVMLTEYAADIKTAVAYPPASLVNTFGEWMAKNDKTQLRISETEKYAHVTFFFNGGVEESFKGEDRILINSPKVATYDLQPEMSSAELTEKLVAAIKSGKYDTIICNYPNGDMVGHTGVMEAAVKAVEALDHCVEEVAKAVESVGGQLLITADHGNAEQMRDPATGQAHTAHTNLPVPLIYVGDKNVKAVEGGKLSDIAPTMLSLMGMEIPQEMTGKPLFIVE.

2 residues coordinate Mn(2+): Asp14 and Ser64. Residue Ser64 is the Phosphoserine intermediate of the active site. Residues His125, 155 to 156 (RD), Arg187, Arg193, 263 to 266 (RADR), and Lys336 each bind substrate. 5 residues coordinate Mn(2+): Asp403, His407, Asp444, His445, and His463.

It belongs to the BPG-independent phosphoglycerate mutase family. As to quaternary structure, monomer. Requires Mn(2+) as cofactor.

The catalysed reaction is (2R)-2-phosphoglycerate = (2R)-3-phosphoglycerate. The protein operates within carbohydrate degradation; glycolysis; pyruvate from D-glyceraldehyde 3-phosphate: step 3/5. In terms of biological role, catalyzes the interconversion of 2-phosphoglycerate and 3-phosphoglycerate. This is 2,3-bisphosphoglycerate-independent phosphoglycerate mutase from Escherichia coli O6:H1 (strain CFT073 / ATCC 700928 / UPEC).